Here is a 426-residue protein sequence, read N- to C-terminus: Tyrosine--tRNA ligase (426 aa).

Y35 contributes to the L-tyrosine binding site. Residues 40 to 49 (PTAPSLHIGH) carry the 'HIGH' region motif. Positions 174 and 178 each coordinate L-tyrosine. The 'KMSKS' region signature appears at 234–238 (KFGKT). K237 serves as a coordination point for ATP. Positions 358 to 418 (PRVVDALVAT…WAVIRRGRRA (61 aa)) constitute an S4 RNA-binding domain.

The protein belongs to the class-I aminoacyl-tRNA synthetase family. TyrS type 1 subfamily. Homodimer.

Its subcellular location is the cytoplasm. It carries out the reaction tRNA(Tyr) + L-tyrosine + ATP = L-tyrosyl-tRNA(Tyr) + AMP + diphosphate + H(+). Its function is as follows. Catalyzes the attachment of tyrosine to tRNA(Tyr) in a two-step reaction: tyrosine is first activated by ATP to form Tyr-AMP and then transferred to the acceptor end of tRNA(Tyr). In Acidothermus cellulolyticus (strain ATCC 43068 / DSM 8971 / 11B), this protein is Tyrosine--tRNA ligase.